The chain runs to 424 residues: CinA-like protein (424 aa).

This sequence belongs to the CinA family.

The protein is CinA-like protein of Shewanella loihica (strain ATCC BAA-1088 / PV-4).